The chain runs to 218 residues: Protein N-lysine methyltransferase METTL21A (218 aa).

Residues Trp47, 73–75 (GAG), Asp94, Trp125, and Ala143 each bind S-adenosyl-L-methionine.

This sequence belongs to the methyltransferase superfamily. METTL21 family.

The protein resides in the cytoplasm. The catalysed reaction is L-lysyl-[protein] + 3 S-adenosyl-L-methionine = N(6),N(6),N(6)-trimethyl-L-lysyl-[protein] + 3 S-adenosyl-L-homocysteine + 3 H(+). Protein-lysine methyltransferase that selectively trimethylates residues in heat shock protein 70 (HSP70) family members. The protein is Protein N-lysine methyltransferase METTL21A (mettl21a) of Danio rerio (Zebrafish).